The chain runs to 307 residues: Ribonuclease Z (307 aa).

Residues His-63, His-65, Asp-67, His-68, His-140, Asp-211, and His-269 each contribute to the Zn(2+) site. The active-site Proton acceptor is Asp-67.

This sequence belongs to the RNase Z family. In terms of assembly, homodimer. Zn(2+) is required as a cofactor.

It carries out the reaction Endonucleolytic cleavage of RNA, removing extra 3' nucleotides from tRNA precursor, generating 3' termini of tRNAs. A 3'-hydroxy group is left at the tRNA terminus and a 5'-phosphoryl group is left at the trailer molecule.. Functionally, zinc phosphodiesterase, which displays some tRNA 3'-processing endonuclease activity. Probably involved in tRNA maturation, by removing a 3'-trailer from precursor tRNA. The chain is Ribonuclease Z from Geobacillus kaustophilus (strain HTA426).